A 267-amino-acid polypeptide reads, in one-letter code: Dihydropteroate synthase (267 aa).

Residues 1 to 251 (MTKTKIMGIL…NVELNAKLAK (251 aa)) form the Pterin-binding domain. Asn11 contacts Mg(2+). Residues Thr51, Asp84, Asn103, Asp167, Lys203, and 239-241 (RVH) each bind (7,8-dihydropterin-6-yl)methyl diphosphate.

It belongs to the DHPS family. As to quaternary structure, homodimer. Requires Mg(2+) as cofactor.

It catalyses the reaction (7,8-dihydropterin-6-yl)methyl diphosphate + 4-aminobenzoate = 7,8-dihydropteroate + diphosphate. Its pathway is cofactor biosynthesis; tetrahydrofolate biosynthesis; 7,8-dihydrofolate from 2-amino-4-hydroxy-6-hydroxymethyl-7,8-dihydropteridine diphosphate and 4-aminobenzoate: step 1/2. In terms of biological role, catalyzes the condensation of para-aminobenzoate (pABA) with 6-hydroxymethyl-7,8-dihydropterin diphosphate (DHPt-PP) to form 7,8-dihydropteroate (H2Pte), the immediate precursor of folate derivatives. The chain is Dihydropteroate synthase (folP) from Staphylococcus aureus (strain MW2).